The following is a 236-amino-acid chain: Phosphoribosylaminoimidazole-succinocarboxamide synthase (236 aa).

Belongs to the SAICAR synthetase family.

The enzyme catalyses 5-amino-1-(5-phospho-D-ribosyl)imidazole-4-carboxylate + L-aspartate + ATP = (2S)-2-[5-amino-1-(5-phospho-beta-D-ribosyl)imidazole-4-carboxamido]succinate + ADP + phosphate + 2 H(+). Its pathway is purine metabolism; IMP biosynthesis via de novo pathway; 5-amino-1-(5-phospho-D-ribosyl)imidazole-4-carboxamide from 5-amino-1-(5-phospho-D-ribosyl)imidazole-4-carboxylate: step 1/2. This chain is Phosphoribosylaminoimidazole-succinocarboxamide synthase, found in Campylobacter curvus (strain 525.92).